The chain runs to 155 residues: Ribosomal RNA large subunit methyltransferase H (155 aa).

S-adenosyl-L-methionine-binding positions include L72, G103, and 122-127 (LSPLTL).

Belongs to the RNA methyltransferase RlmH family. In terms of assembly, homodimer.

The protein resides in the cytoplasm. The catalysed reaction is pseudouridine(1915) in 23S rRNA + S-adenosyl-L-methionine = N(3)-methylpseudouridine(1915) in 23S rRNA + S-adenosyl-L-homocysteine + H(+). Functionally, specifically methylates the pseudouridine at position 1915 (m3Psi1915) in 23S rRNA. The polypeptide is Ribosomal RNA large subunit methyltransferase H (Haemophilus influenzae (strain PittEE)).